A 919-amino-acid chain; its full sequence is Isoleucine--tRNA ligase (919 aa).

Positions 57 to 67 (PYANGDIHMGT) match the 'HIGH' region motif. E552 contacts L-isoleucyl-5'-AMP. A 'KMSKS' region motif is present at residues 593–597 (KMSKS). K596 is a binding site for ATP. Residues C886, C889, C906, and C909 each coordinate Zn(2+).

The protein belongs to the class-I aminoacyl-tRNA synthetase family. IleS type 1 subfamily. As to quaternary structure, monomer. It depends on Zn(2+) as a cofactor.

It localises to the cytoplasm. It carries out the reaction tRNA(Ile) + L-isoleucine + ATP = L-isoleucyl-tRNA(Ile) + AMP + diphosphate. In terms of biological role, catalyzes the attachment of isoleucine to tRNA(Ile). As IleRS can inadvertently accommodate and process structurally similar amino acids such as valine, to avoid such errors it has two additional distinct tRNA(Ile)-dependent editing activities. One activity is designated as 'pretransfer' editing and involves the hydrolysis of activated Val-AMP. The other activity is designated 'posttransfer' editing and involves deacylation of mischarged Val-tRNA(Ile). In Petrotoga mobilis (strain DSM 10674 / SJ95), this protein is Isoleucine--tRNA ligase.